Reading from the N-terminus, the 125-residue chain is Napin-3 (125 aa).

4 disulfides stabilise this stretch: cysteine 10–cysteine 62, cysteine 23–cysteine 51, cysteine 52–cysteine 107, and cysteine 64–cysteine 115.

This sequence belongs to the 2S seed storage albumins family. The mature protein consists of a small and a large chain linked by disulfide bonds.

In terms of biological role, the small, basic, water-soluble napins are one of the two major kinds of storage proteins synthesized in the seed during its maturation. This chain is Napin-3, found in Brassica napus (Rape).